The chain runs to 475 residues: Ribulose bisphosphate carboxylase large chain (475 aa).

Residues methionine 1–serine 2 constitute a propeptide that is removed on maturation. Proline 3 carries the post-translational modification N-acetylproline. Lysine 14 is subject to N6,N6,N6-trimethyllysine. 2 residues coordinate substrate: asparagine 123 and threonine 173. The active-site Proton acceptor is the lysine 175. Lysine 177 lines the substrate pocket. Lysine 201, aspartate 203, and glutamate 204 together coordinate Mg(2+). Lysine 201 carries the N6-carboxylysine modification. The active-site Proton acceptor is histidine 294. The substrate site is built by arginine 295, histidine 327, and serine 379.

The protein belongs to the RuBisCO large chain family. Type I subfamily. As to quaternary structure, heterohexadecamer of 8 large chains and 8 small chains; disulfide-linked. The disulfide link is formed within the large subunit homodimers. Mg(2+) serves as cofactor. Post-translationally, the disulfide bond which can form in the large chain dimeric partners within the hexadecamer appears to be associated with oxidative stress and protein turnover.

It localises to the plastid. The protein localises to the chloroplast. It carries out the reaction 2 (2R)-3-phosphoglycerate + 2 H(+) = D-ribulose 1,5-bisphosphate + CO2 + H2O. The catalysed reaction is D-ribulose 1,5-bisphosphate + O2 = 2-phosphoglycolate + (2R)-3-phosphoglycerate + 2 H(+). Functionally, ruBisCO catalyzes two reactions: the carboxylation of D-ribulose 1,5-bisphosphate, the primary event in carbon dioxide fixation, as well as the oxidative fragmentation of the pentose substrate in the photorespiration process. Both reactions occur simultaneously and in competition at the same active site. The protein is Ribulose bisphosphate carboxylase large chain of Angiopteris lygodiifolia (Turnip fern).